The chain runs to 366 residues: Histidinol-phosphate aminotransferase 2 (366 aa).

A compositionally biased stretch (polar residues) spans 1–11 (MQVKDQLSSLQ). Residues 1 to 21 (MQVKDQLSSLQPYKPGKSPEQ) form a disordered region. Lys-222 carries the N6-(pyridoxal phosphate)lysine modification.

This sequence belongs to the class-II pyridoxal-phosphate-dependent aminotransferase family. Histidinol-phosphate aminotransferase subfamily. Homodimer. Requires pyridoxal 5'-phosphate as cofactor.

The catalysed reaction is L-histidinol phosphate + 2-oxoglutarate = 3-(imidazol-4-yl)-2-oxopropyl phosphate + L-glutamate. It participates in amino-acid biosynthesis; L-histidine biosynthesis; L-histidine from 5-phospho-alpha-D-ribose 1-diphosphate: step 7/9. This is Histidinol-phosphate aminotransferase 2 (hisC2) from Bacillus anthracis.